The following is a 225-amino-acid chain: MVTRERAENRDGPKMLKPLVEKRRRDRINRSLEELRLLLLERTRDQNLRNPKLEKAEILEFAVGYLRERSRVEPPGVPRSPGQDAEALASCYLSGFRECLLRLAAFAHDASPAARSQLFSALHGYRRPKPPRPEAVDPGLPAPRPPLDPASPILGPALHQRPPVHQGPPSPRLAWSPSHCSSRAGDSGAPAPLTGLLPPPPPPYRQDGAPKAPSLPPPAFWRPWP.

Positions 12 to 69 constitute a bHLH domain; that stretch reads GPKMLKPLVEKRRRDRINRSLEELRLLLLERTRDQNLRNPKLEKAEILEFAVGYLRER. In terms of domain architecture, Orange spans 92-122; that stretch reads YLSGFRECLLRLAAFAHDASPAARSQLFSAL. A disordered region spans residues 124-225; sequence GYRRPKPPRP…PPPAFWRPWP (102 aa). Composition is skewed to pro residues over residues 140 to 149 and 213 to 225; these read LPAPRPPLDP and PSLP…RPWP. A WRPW motif motif is present at residues 221–224; sequence WRPW.

In terms of assembly, transcription repression requires formation of a complex with a corepressor protein of the Groucho/TLE family.

It localises to the nucleus. Functionally, transcriptional repressor. Represses transcription from both N box- and E box-containing promoters. May with HES1, cooperatively regulate somite formation in the presomitic mesoderm (PSM). May function as a segmentation clock, which is essential for coordinated somite segmentation. The protein is Transcription factor HES-7 (Hes7) of Mus musculus (Mouse).